The following is a 510-amino-acid chain: ATP synthase subunit alpha (510 aa).

169-176 (GDRQTGKT) is a binding site for ATP.

The protein belongs to the ATPase alpha/beta chains family. F-type ATPases have 2 components, CF(1) - the catalytic core - and CF(0) - the membrane proton channel. CF(1) has five subunits: alpha(3), beta(3), gamma(1), delta(1), epsilon(1). CF(0) has four main subunits: a(1), b(1), b'(1) and c(9-12).

The protein resides in the cell inner membrane. It carries out the reaction ATP + H2O + 4 H(+)(in) = ADP + phosphate + 5 H(+)(out). Functionally, produces ATP from ADP in the presence of a proton gradient across the membrane. The alpha chain is a regulatory subunit. The chain is ATP synthase subunit alpha from Rhodopseudomonas palustris (strain HaA2).